We begin with the raw amino-acid sequence, 215 residues long: UPF0502 protein Shew_1617 (215 aa).

Belongs to the UPF0502 family.

The chain is UPF0502 protein Shew_1617 from Shewanella loihica (strain ATCC BAA-1088 / PV-4).